Reading from the N-terminus, the 290-residue chain is N-acetylmannosamine kinase (290 aa).

Residues 6–13 and 132–139 contribute to the ATP site; these read ALDIGGTK and GVGGGIIL. Residues H156, C166, C168, and C173 each coordinate Zn(2+).

The protein belongs to the ROK (NagC/XylR) family. NanK subfamily. Homodimer.

The catalysed reaction is an N-acyl-D-mannosamine + ATP = an N-acyl-D-mannosamine 6-phosphate + ADP + H(+). It participates in amino-sugar metabolism; N-acetylneuraminate degradation; D-fructose 6-phosphate from N-acetylneuraminate: step 2/5. Functionally, catalyzes the phosphorylation of N-acetylmannosamine (ManNAc) to ManNAc-6-P. The sequence is that of N-acetylmannosamine kinase from Yersinia pseudotuberculosis serotype O:3 (strain YPIII).